The chain runs to 428 residues: Adenylosuccinate synthetase (428 aa).

Residues 12–18 (GDEGKGK) and 40–42 (GHT) each bind GTP. Catalysis depends on Asp13, which acts as the Proton acceptor. Positions 13 and 40 each coordinate Mg(2+). IMP is bound by residues 13–16 (DEGK), 38–41 (NAGH), Thr128, Arg142, Gln223, Thr238, and Arg302. Residue His41 is the Proton donor of the active site. Residue 298-304 (TTTGRPR) participates in substrate binding. GTP-binding positions include Arg304, 330 to 332 (KLD), and 412 to 414 (SVG).

It belongs to the adenylosuccinate synthetase family. Homodimer. Mg(2+) is required as a cofactor.

It localises to the cytoplasm. It catalyses the reaction IMP + L-aspartate + GTP = N(6)-(1,2-dicarboxyethyl)-AMP + GDP + phosphate + 2 H(+). It functions in the pathway purine metabolism; AMP biosynthesis via de novo pathway; AMP from IMP: step 1/2. Its function is as follows. Plays an important role in the de novo pathway of purine nucleotide biosynthesis. Catalyzes the first committed step in the biosynthesis of AMP from IMP. The polypeptide is Adenylosuccinate synthetase (Desulforamulus reducens (strain ATCC BAA-1160 / DSM 100696 / MI-1) (Desulfotomaculum reducens)).